The sequence spans 566 residues: 5'-AMP-activated protein kinase subunit gamma-2 (566 aa).

The segment at 1–198 is disordered; the sequence is MGSAAMDTKK…SRIYASSSPP (198 aa). Over residues 15-25 the composition is skewed to low complexity; sequence SSPGGSSGKKN. The segment covering 54-64 has biased composition (basic and acidic residues); it reads NSEKHSSRKVD. A phosphoserine mark is found at Ser65, Ser71, Ser73, Ser90, Ser138, Ser143, Ser158, Ser161, and Ser162. 2 stretches are compositionally biased toward low complexity: residues 132-144 and 156-172; these read KESS…STSP and TSSV…VTKQ. Thr165 is subject to Phosphothreonine. The segment covering 180–189 has biased composition (basic and acidic residues); the sequence is YKQEPERPES. The residue at position 196 (Ser196) is a Phosphoserine. CBS domains lie at 272-332, 354-412, and 427-489; these read PTSS…KSPM, TFKP…MSDM, and IGTY…NLDI. ADP contacts are provided by residues Arg299, 314–319, Val359, 380–381, and Lys399; these read MLTITD and HR. Residues Arg299, 314 to 319, Val359, His380, 380 to 381, Lys399, Thr429, Ala434, 455 to 456, 471 to 474, Arg498, His527, 527 to 528, and 543 to 546 contribute to the AMP site; these read MLTITD, HR, SA, SKFD, and SLSD. ATP is bound by residues Arg299, 314–319, Val359, 380–381, Arg381, and Lys399; these read MLTITD and HR. An AMPK pseudosubstrate motif is present at residues 367–388; it reads LFDAVYSLIKNKIHRLPVIDPI. Residues 471 to 474, Arg498, and 527 to 528 contribute to the ADP site; these read SKFD and HR. Residues 471–474, Arg498, and 527–528 contribute to the ATP site; these read SKFD and HR. The 59-residue stretch at 501–559 folds into the CBS 4 domain; the sequence is YFEGVVKCSKLETLETIVDRIVRAEVHRLVVVNEADSIVGIISLSDILQALILTPAGAK.

This sequence belongs to the 5'-AMP-activated protein kinase gamma subunit family. AMPK is a heterotrimer of an alpha catalytic subunit (PRKAA1 or PRKAA2), a beta (PRKAB1 or PRKAB2) and a gamma non-catalytic subunits (PRKAG1, PRKAG2 or PRKAG3). Interacts with FNIP1 and FNIP2. Post-translationally, phosphorylated by ULK1; leading to negatively regulate AMPK activity and suggesting the existence of a regulatory feedback loop between ULK1 and AMPK. Glycosylated; O-GlcNAcylated by OGT, promoting the AMP-activated protein kinase (AMPK) activity.

AMP/ATP-binding subunit of AMP-activated protein kinase (AMPK), an energy sensor protein kinase that plays a key role in regulating cellular energy metabolism. In response to reduction of intracellular ATP levels, AMPK activates energy-producing pathways and inhibits energy-consuming processes: inhibits protein, carbohydrate and lipid biosynthesis, as well as cell growth and proliferation. AMPK acts via direct phosphorylation of metabolic enzymes, and by longer-term effects via phosphorylation of transcription regulators. Also acts as a regulator of cellular polarity by remodeling the actin cytoskeleton; probably by indirectly activating myosin. Gamma non-catalytic subunit mediates binding to AMP, ADP and ATP, leading to activate or inhibit AMPK: AMP-binding results in allosteric activation of alpha catalytic subunit (PRKAA1 or PRKAA2) both by inducing phosphorylation and preventing dephosphorylation of catalytic subunits. ADP also stimulates phosphorylation, without stimulating already phosphorylated catalytic subunit. ATP promotes dephosphorylation of catalytic subunit, rendering the AMPK enzyme inactive. This chain is 5'-AMP-activated protein kinase subunit gamma-2 (Prkag2), found in Mus musculus (Mouse).